The following is a 483-amino-acid chain: NAD-dependent protein deacetylase SRT1 (483 aa).

The Deacetylase sirtuin-type domain occupies 27 to 270; sequence PELLHKKIEE…MYMMNLRIPP (244 aa). Residues 53-57, 63-65, and 114-117 contribute to the NAD(+) site; these read AGIST, DFR, and QNVD. H134 functions as the Proton acceptor in the catalytic mechanism. Positions 142, 145, 167, and 172 each coordinate Zn(2+). Residues 209-211 and 235-237 each bind NAD(+); these read GTS and NLQ.

Belongs to the sirtuin family. Class IV subfamily. Zn(2+) serves as cofactor.

The protein localises to the nucleus. It catalyses the reaction N(6)-acetyl-L-lysyl-[protein] + NAD(+) + H2O = 2''-O-acetyl-ADP-D-ribose + nicotinamide + L-lysyl-[protein]. Its function is as follows. NAD-dependent protein deacetylase. Has deacetylase activity towards H3K9Ac. May have a function in the safeguard against genome instability and DNA damage to ensure plant cell growth. May negatively regulate metabolic signal transduction involving methanol and jasmonates during leaf senescence. Required for histone H3K9Ac deacetylation and repression of AP2-1/RSR1 and amylase genes during early seed development. Functions as an epigenetic regulator to repress the expression of glycolytic genes and glycolysis in seedlings. Reduces lysine acetylation of the glycolytic glyceraldehyde-3-phosphate dehydrogenase (GAPDH), which is found to also function as an activator of glycolytic gene expression. The chain is NAD-dependent protein deacetylase SRT1 from Oryza sativa subsp. indica (Rice).